Reading from the N-terminus, the 322-residue chain is 4-hydroxy-3-methylbut-2-enyl diphosphate reductase (322 aa).

Cys15 contributes to the [4Fe-4S] cluster binding site. Positions 44 and 77 each coordinate (2E)-4-hydroxy-3-methylbut-2-enyl diphosphate. 2 residues coordinate dimethylallyl diphosphate: His44 and His77. Isopentenyl diphosphate is bound by residues His44 and His77. Cys99 contributes to the [4Fe-4S] cluster binding site. His127 provides a ligand contact to (2E)-4-hydroxy-3-methylbut-2-enyl diphosphate. His127 contacts dimethylallyl diphosphate. His127 is a binding site for isopentenyl diphosphate. The active-site Proton donor is the Glu129. (2E)-4-hydroxy-3-methylbut-2-enyl diphosphate is bound at residue Thr168. Residue Cys198 participates in [4Fe-4S] cluster binding. (2E)-4-hydroxy-3-methylbut-2-enyl diphosphate-binding residues include Ser226, Ser227, Asn228, and Ser270. Dimethylallyl diphosphate contacts are provided by Ser226, Ser227, Asn228, and Ser270. Residues Ser226, Ser227, Asn228, and Ser270 each coordinate isopentenyl diphosphate.

This sequence belongs to the IspH family. [4Fe-4S] cluster is required as a cofactor.

It carries out the reaction isopentenyl diphosphate + 2 oxidized [2Fe-2S]-[ferredoxin] + H2O = (2E)-4-hydroxy-3-methylbut-2-enyl diphosphate + 2 reduced [2Fe-2S]-[ferredoxin] + 2 H(+). It catalyses the reaction dimethylallyl diphosphate + 2 oxidized [2Fe-2S]-[ferredoxin] + H2O = (2E)-4-hydroxy-3-methylbut-2-enyl diphosphate + 2 reduced [2Fe-2S]-[ferredoxin] + 2 H(+). It participates in isoprenoid biosynthesis; dimethylallyl diphosphate biosynthesis; dimethylallyl diphosphate from (2E)-4-hydroxy-3-methylbutenyl diphosphate: step 1/1. It functions in the pathway isoprenoid biosynthesis; isopentenyl diphosphate biosynthesis via DXP pathway; isopentenyl diphosphate from 1-deoxy-D-xylulose 5-phosphate: step 6/6. Catalyzes the conversion of 1-hydroxy-2-methyl-2-(E)-butenyl 4-diphosphate (HMBPP) into a mixture of isopentenyl diphosphate (IPP) and dimethylallyl diphosphate (DMAPP). Acts in the terminal step of the DOXP/MEP pathway for isoprenoid precursor biosynthesis. The protein is 4-hydroxy-3-methylbut-2-enyl diphosphate reductase of Neisseria meningitidis serogroup A / serotype 4A (strain DSM 15465 / Z2491).